The following is a 102-amino-acid chain: Class II hydrophobin 3 (102 aa).

A signal peptide spans 1 to 16 (MQFLAVAALLFTTALA). 4 disulfides stabilise this stretch: C33–C83, C44–C74, C45–C57, and C84–C95.

This sequence belongs to the cerato-ulmin hydrophobin family. Homotetramer. Further self-assembles to form highly ordered films at water-air interfaces through intermolecular interactions. As to expression, expressed in the conidia, vegetative growth and induction growth stages.

It localises to the secreted. The protein localises to the cell wall. The protein resides in the cytoplasm. In terms of biological role, aerial growth, conidiation, and dispersal of filamentous fungi in the environment rely upon a capability of their secreting small amphipathic proteins called hydrophobins (HPBs) with low sequence identity. Class I can self-assemble into an outermost layer of rodlet bundles on aerial cell surfaces, conferring cellular hydrophobicity that supports fungal growth, development and dispersal; whereas Class II form highly ordered films at water-air interfaces through intermolecular interactions but contribute nothing to the rodlet structure. Hbf3 is a class II hydrophobin that has a role in vegetative growth and asexual development. This Hypocrea jecorina (strain QM6a) (Trichoderma reesei) protein is Class II hydrophobin 3.